Reading from the N-terminus, the 323-residue chain is tRNA dimethylallyltransferase (323 aa).

12–19 (GPTAAGKT) provides a ligand contact to ATP. A substrate-binding site is contributed by 14–19 (TAAGKT). Interaction with substrate tRNA regions lie at residues 37 to 40 (DSAL) and 161 to 165 (QRLMR).

Belongs to the IPP transferase family. As to quaternary structure, monomer. It depends on Mg(2+) as a cofactor.

The catalysed reaction is adenosine(37) in tRNA + dimethylallyl diphosphate = N(6)-dimethylallyladenosine(37) in tRNA + diphosphate. Its function is as follows. Catalyzes the transfer of a dimethylallyl group onto the adenine at position 37 in tRNAs that read codons beginning with uridine, leading to the formation of N6-(dimethylallyl)adenosine (i(6)A). This chain is tRNA dimethylallyltransferase, found in Pseudomonas aeruginosa (strain UCBPP-PA14).